Consider the following 346-residue polypeptide: Biotin synthase (346 aa).

Residues 38-256 (QQVQVSTLLS…IAVARIMMPT (219 aa)) form the Radical SAM core domain. Residues Cys-53, Cys-57, and Cys-60 each coordinate [4Fe-4S] cluster. Residues Cys-97, Cys-128, Cys-188, and Arg-260 each contribute to the [2Fe-2S] cluster site.

It belongs to the radical SAM superfamily. Biotin synthase family. As to quaternary structure, homodimer. It depends on [4Fe-4S] cluster as a cofactor. The cofactor is [2Fe-2S] cluster.

The catalysed reaction is (4R,5S)-dethiobiotin + (sulfur carrier)-SH + 2 reduced [2Fe-2S]-[ferredoxin] + 2 S-adenosyl-L-methionine = (sulfur carrier)-H + biotin + 2 5'-deoxyadenosine + 2 L-methionine + 2 oxidized [2Fe-2S]-[ferredoxin]. The protein operates within cofactor biosynthesis; biotin biosynthesis; biotin from 7,8-diaminononanoate: step 2/2. Its function is as follows. Catalyzes the conversion of dethiobiotin (DTB) to biotin by the insertion of a sulfur atom into dethiobiotin via a radical-based mechanism. This chain is Biotin synthase, found in Salmonella choleraesuis (strain SC-B67).